We begin with the raw amino-acid sequence, 223 residues long: Imidazoleglycerol-phosphate dehydratase (223 aa).

This sequence belongs to the imidazoleglycerol-phosphate dehydratase family.

It carries out the reaction D-erythro-1-(imidazol-4-yl)glycerol 3-phosphate = 3-(imidazol-4-yl)-2-oxopropyl phosphate + H2O. The protein operates within amino-acid biosynthesis; L-histidine biosynthesis; L-histidine from 5-phospho-alpha-D-ribose 1-diphosphate: step 6/9. The protein is Imidazoleglycerol-phosphate dehydratase (HIS3) of Candida albicans (Yeast).